The following is a 342-amino-acid chain: Holliday junction branch migration complex subunit RuvB (342 aa).

Residues 1–185 are large ATPase domain (RuvB-L); it reads MREDYLKSDD…FGINARLEYY (185 aa). ATP contacts are provided by residues Leu24, Arg25, Gly66, Lys69, Thr70, Thr71, 132–134, Arg175, Tyr185, and Arg222; that span reads EDY. Residue Thr70 participates in Mg(2+) binding. The tract at residues 186–256 is small ATPAse domain (RuvB-S); the sequence is DAKLLTRIVQ…IARIALQALN (71 aa). A head domain (RuvB-H) region spans residues 259-342; sequence HNGLDDMDNR…PPAQSGTLFE (84 aa). Residues Arg314 and Arg319 each coordinate DNA.

Belongs to the RuvB family. Homohexamer. Forms an RuvA(8)-RuvB(12)-Holliday junction (HJ) complex. HJ DNA is sandwiched between 2 RuvA tetramers; dsDNA enters through RuvA and exits via RuvB. An RuvB hexamer assembles on each DNA strand where it exits the tetramer. Each RuvB hexamer is contacted by two RuvA subunits (via domain III) on 2 adjacent RuvB subunits; this complex drives branch migration. In the full resolvosome a probable DNA-RuvA(4)-RuvB(12)-RuvC(2) complex forms which resolves the HJ.

It is found in the cytoplasm. It carries out the reaction ATP + H2O = ADP + phosphate + H(+). In terms of biological role, the RuvA-RuvB-RuvC complex processes Holliday junction (HJ) DNA during genetic recombination and DNA repair, while the RuvA-RuvB complex plays an important role in the rescue of blocked DNA replication forks via replication fork reversal (RFR). RuvA specifically binds to HJ cruciform DNA, conferring on it an open structure. The RuvB hexamer acts as an ATP-dependent pump, pulling dsDNA into and through the RuvAB complex. RuvB forms 2 homohexamers on either side of HJ DNA bound by 1 or 2 RuvA tetramers; 4 subunits per hexamer contact DNA at a time. Coordinated motions by a converter formed by DNA-disengaged RuvB subunits stimulates ATP hydrolysis and nucleotide exchange. Immobilization of the converter enables RuvB to convert the ATP-contained energy into a lever motion, pulling 2 nucleotides of DNA out of the RuvA tetramer per ATP hydrolyzed, thus driving DNA branch migration. The RuvB motors rotate together with the DNA substrate, which together with the progressing nucleotide cycle form the mechanistic basis for DNA recombination by continuous HJ branch migration. Branch migration allows RuvC to scan DNA until it finds its consensus sequence, where it cleaves and resolves cruciform DNA. The polypeptide is Holliday junction branch migration complex subunit RuvB (Cytophaga hutchinsonii (strain ATCC 33406 / DSM 1761 / CIP 103989 / NBRC 15051 / NCIMB 9469 / D465)).